The sequence spans 200 residues: GTP-binding protein rho2 (200 aa).

15–22 (GDGACGKT) provides a ligand contact to GTP. Positions 37-45 (YVPTVFENY) match the Effector region motif. Residues 62–66 (DTAGQ) and 120–123 (MKAD) contribute to the GTP site. Cys-197 carries the cysteine methyl ester modification. Cys-197 carries S-geranylgeranyl cysteine lipidation. The propeptide at 198–200 (IIS) is removed in mature form.

The protein belongs to the small GTPase superfamily. Rho family. Interacts with pck2.

It localises to the cell membrane. Involved in cell morphogenesis, the maintenance of growth direction, control of polarity and of cell wall integrity. Regulates the synthesis of alpha-D-glucan through activation of pck2. The sequence is that of GTP-binding protein rho2 (rho2) from Schizosaccharomyces pombe (strain 972 / ATCC 24843) (Fission yeast).